We begin with the raw amino-acid sequence, 229 residues long: Sperm flagellar protein 1 (229 aa).

The region spanning 7 to 115 (EETMQELYTW…TLRQKIEEKQ (109 aa)) is the Calponin-homology (CH) domain. The interval 122–169 (ADLSQDQATQNNGNTHSDKGYKSNGTELSPRQGARVDPASKTHQGYAQ) is disordered. Positions 123 to 136 (DLSQDQATQNNGNT) are enriched in polar residues. An essential for homodimerization and microtubule bundling activity region spans residues 178-229 (RFQLAEKEQTLILSQETIQILQAKLRRLEQLLLLKNVRIDDLTRRLQELEKK).

In terms of assembly, homodimer.

The protein resides in the cytoplasm. Its subcellular location is the cytoskeleton. It localises to the cilium axoneme. It is found in the apical cell membrane. In terms of biological role, microtubule-associated protein involved in the stabilization of microtubules along the axis of migration during radial intercalation. Promotes the establishment and stabilization of an axis of microtubules required for the active migration of cells into the outer epithelium. Microtubule-associated protein that promotes microtubule bundling and stabilizes microtubules against depolymerization in response to cold shock. Essential for ciliary central apparatus formation which requires both its microtubule-binding and bundling activities. Regulates planar cell polarity signaling pathway and asymmetric microtubule accumulation in ciliated epithelia. The chain is Sperm flagellar protein 1 from Xenopus laevis (African clawed frog).